We begin with the raw amino-acid sequence, 663 residues long: MAIPEEFDILVLGGGSSGSCIAGRLANLDHSLKVGLIEAGENNLNNPWVYLPGIYPRNMKLDSKTASFYTSNPSPHLNGRRAIVPCANILGGGSSINFMMYTRGSASDYDDFEAEGWKTKDLLPLMKKTETYQRACNNPEIHGFEGPIKVSFGNYTYPVCQDFLRATESQGIPYVDDLEDLVTAHGAEHWLKWINRDTGRRSDSAHAFVHSTMRNHDNLYLICNTKVDKIIVEDGRAAAVRTVPSKPLNAKKPTHKVYRARKQIVLSCGTISSPLVLQRSGFGDPIKLRAAGVKPLVNLPGVGRNFQDHYCFFSPYRIKPQYESFDDFVRGDANIQKKVFDQWYANGTGPLATNGIEAGVKIRPTPEELSQMDESFQEGYREYFEDKPDKPVMHYSIIAGFFGDHTKIPPGKYMTMFHFLEYPFSRGSIHITSPDPYATPDFDPGFMNDERDMAPMVWSYKKSRETARKMDHFAGEVTSHHPLFPYSSEARAYEMDLETSNAYGGPLNLTAGLAHGSWTQPLKKPAGRNEGHVTSNQVELHPDIEYDEEDDKAIENYIREHTETTWHCLGTCSIGPREGSKIVKWGGVLDHRSNVYGVKGLKVGDLSVCPDNVGCNTYTTALLIGEKTATLVGEDLGYTGEALDMTVPQFKLGTYEKTGLARF.

An FAD-binding site is contributed by 8–38 (DILVLGGGSSGSCIAGRLANLDHSLKVGLIE). Residue His-567 is the Proton acceptor of the active site. The Microbody targeting signal signature appears at 661–663 (ARF).

This sequence belongs to the GMC oxidoreductase family. In terms of assembly, homooctamer. Requires FAD as cofactor.

The protein localises to the peroxisome matrix. It carries out the reaction a primary alcohol + O2 = an aldehyde + H2O2. The protein operates within energy metabolism; methane degradation. Minor isoform of alcohol oxidase, which catalyzes the oxidation of methanol to formaldehyde and hydrogen peroxide, the first step in the methanol utilization pathway of methylotrophic yeasts. The sequence is that of Alcohol oxidase 2 (AOX2) from Komagataella phaffii (strain ATCC 76273 / CBS 7435 / CECT 11047 / NRRL Y-11430 / Wegner 21-1) (Yeast).